Consider the following 557-residue polypeptide: Coiled-coil domain-containing protein 22 homolog (557 aa).

Coiled-coil stretches lie at residues 260 to 350 (RLGQ…LQSQ) and 489 to 554 (ELTA…AGRN).

This sequence belongs to the CCDC22 family.

The protein is Coiled-coil domain-containing protein 22 homolog of Anopheles gambiae (African malaria mosquito).